We begin with the raw amino-acid sequence, 180 residues long: Translation initiation factor IF-3 (180 aa).

The protein belongs to the IF-3 family. Monomer.

It is found in the cytoplasm. IF-3 binds to the 30S ribosomal subunit and shifts the equilibrium between 70S ribosomes and their 50S and 30S subunits in favor of the free subunits, thus enhancing the availability of 30S subunits on which protein synthesis initiation begins. In Hyphomonas neptunium (strain ATCC 15444), this protein is Translation initiation factor IF-3.